Reading from the N-terminus, the 102-residue chain is Small ribosomal subunit protein uS10 (102 aa).

This sequence belongs to the universal ribosomal protein uS10 family. As to quaternary structure, part of the 30S ribosomal subunit.

In terms of biological role, involved in the binding of tRNA to the ribosomes. In Treponema pallidum (strain Nichols), this protein is Small ribosomal subunit protein uS10.